Consider the following 539-residue polypeptide: Chaperone Ric-8A (539 aa).

The tract at residues 507 to 539 is disordered; sequence MGITPSGNLAPMENAIRDMADERSSSDSDLGLD. Over residues 521–532 the composition is skewed to basic and acidic residues; the sequence is AIRDMADERSSS.

The protein belongs to the synembryn family.

The protein resides in the cytoplasm. It localises to the cell cortex. Functionally, chaperone that specifically binds and folds nascent G alpha proteins prior to G protein heterotrimer formation, promoting their stability and activity: folds GNAI1, GNAO1, GNA13 and GNAQ. Does not fold G(s) G-alpha proteins GNAS nor GNAL. Also acts as a guanine nucleotide exchange factor (GEF) for G alpha proteins by stimulating exchange of bound GDP for free GTP. This Gallus gallus (Chicken) protein is Chaperone Ric-8A (RIC8A).